The primary structure comprises 288 residues: Energy-coupling factor transporter ATP-binding protein EcfA2 (288 aa).

In terms of domain architecture, ABC transporter spans 3–246 (IKLEQLGYCY…PDELVDLGLS (244 aa)). 40 to 47 (GHTGSGKS) lines the ATP pocket.

This sequence belongs to the ABC transporter superfamily. Energy-coupling factor EcfA family. As to quaternary structure, forms a stable energy-coupling factor (ECF) transporter complex composed of 2 membrane-embedded substrate-binding proteins (S component), 2 ATP-binding proteins (A component) and 2 transmembrane proteins (T component).

It localises to the cell membrane. Its function is as follows. ATP-binding (A) component of a common energy-coupling factor (ECF) ABC-transporter complex. Unlike classic ABC transporters this ECF transporter provides the energy necessary to transport a number of different substrates. The protein is Energy-coupling factor transporter ATP-binding protein EcfA2 of Listeria monocytogenes serotype 4b (strain F2365).